Consider the following 432-residue polypeptide: Glutamate-1-semialdehyde 2,1-aminomutase 1 (432 aa).

The residue at position 268 (K268) is an N6-(pyridoxal phosphate)lysine.

Belongs to the class-III pyridoxal-phosphate-dependent aminotransferase family. HemL subfamily. As to quaternary structure, homodimer. Pyridoxal 5'-phosphate serves as cofactor.

The protein localises to the cytoplasm. It carries out the reaction (S)-4-amino-5-oxopentanoate = 5-aminolevulinate. Its pathway is porphyrin-containing compound metabolism; protoporphyrin-IX biosynthesis; 5-aminolevulinate from L-glutamyl-tRNA(Glu): step 2/2. This chain is Glutamate-1-semialdehyde 2,1-aminomutase 1, found in Bacillus cereus (strain ZK / E33L).